The following is a 99-amino-acid chain: NAD(P)H-quinone oxidoreductase subunit 4L, chloroplastic (99 aa).

The next 3 helical transmembrane spans lie at 1 to 21, 31 to 51, and 59 to 79; these read MFEQ…FGLI, MSLE…SNLF, and IFTL…LAIA.

Belongs to the complex I subunit 4L family. NDH is composed of at least 16 different subunits, 5 of which are encoded in the nucleus.

It localises to the plastid. The protein localises to the chloroplast thylakoid membrane. It carries out the reaction a plastoquinone + NADH + (n+1) H(+)(in) = a plastoquinol + NAD(+) + n H(+)(out). The catalysed reaction is a plastoquinone + NADPH + (n+1) H(+)(in) = a plastoquinol + NADP(+) + n H(+)(out). Functionally, NDH shuttles electrons from NAD(P)H:plastoquinone, via FMN and iron-sulfur (Fe-S) centers, to quinones in the photosynthetic chain and possibly in a chloroplast respiratory chain. The immediate electron acceptor for the enzyme in this species is believed to be plastoquinone. Couples the redox reaction to proton translocation, and thus conserves the redox energy in a proton gradient. This is NAD(P)H-quinone oxidoreductase subunit 4L, chloroplastic from Adiantum capillus-veneris (Maidenhair fern).